We begin with the raw amino-acid sequence, 104 residues long: Synaptic plasticity regulator PANTS (104 aa).

The segment at 58-104 is disordered; the sequence is RRSAEAQADSLPPGPEGEPRVAGAGPNAVTGILTRNQGTERPHGDTR. Positions 95–104 are enriched in basic and acidic residues; it reads GTERPHGDTR.

Belongs to the UPF0545 family. As to quaternary structure, interacts with RTN4 isoform A/Nogo-A; the interaction results in enhanced RTN4-mediated inhibition of AMPA receptor clustering. Also interacts with NCAM1, RANBP2 and CCT8. Rapidly degraded by proteolysis following neuronal stimulation, resulting in increased AMPA receptor clustering.

It is found in the synapse. Its subcellular location is the synaptic cleft. Negatively regulates long-term potentiation and modulates adult synaptic plasticity. Stabilizes the interaction of RTN4 isoform A/Nogo-A with its receptors, inhibiting clustering of postsynaptic AMPA receptors at synaptic sites. Upon neuronal stimulation, degraded at synapses, reducing RTN4 signaling and allowing AMPA receptor clustering at individual synapses. The protein is Synaptic plasticity regulator PANTS of Bos taurus (Bovine).